The chain runs to 238 residues: MATLGVNIDHIANVRQARKTVEPDPVQFAFLAELGGADSITVHLREDRRHIQDRDVFLLKETIKTKLNLEMAATEEMLEIAKKTLPDYVTLVPEKREEVTTEGGLDLKSNAQYLKNFVENLKHSNIEVSAFIDPLGEQINYSKEIGFDFIELHTGKYAELSGSEQYKELQRIIESTHLANDLGLVVNAGHGLNYNNVKKIASINNMNELNIGHSIVARALAIGLEKSVREMKSLITSN.

Asn-7 contributes to the 3-amino-2-oxopropyl phosphate binding site. 9–10 (DH) lines the 1-deoxy-D-xylulose 5-phosphate pocket. 3-amino-2-oxopropyl phosphate is bound at residue Arg-18. His-43 (proton acceptor) is an active-site residue. 2 residues coordinate 1-deoxy-D-xylulose 5-phosphate: Arg-45 and His-50. Glu-70 functions as the Proton acceptor in the catalytic mechanism. 1-deoxy-D-xylulose 5-phosphate is bound at residue Thr-100. The active-site Proton donor is the His-190. Residues Gly-191 and 212–213 (GH) contribute to the 3-amino-2-oxopropyl phosphate site.

Belongs to the PNP synthase family. Homooctamer; tetramer of dimers.

The protein localises to the cytoplasm. The catalysed reaction is 3-amino-2-oxopropyl phosphate + 1-deoxy-D-xylulose 5-phosphate = pyridoxine 5'-phosphate + phosphate + 2 H2O + H(+). It participates in cofactor biosynthesis; pyridoxine 5'-phosphate biosynthesis; pyridoxine 5'-phosphate from D-erythrose 4-phosphate: step 5/5. Catalyzes the complicated ring closure reaction between the two acyclic compounds 1-deoxy-D-xylulose-5-phosphate (DXP) and 3-amino-2-oxopropyl phosphate (1-amino-acetone-3-phosphate or AAP) to form pyridoxine 5'-phosphate (PNP) and inorganic phosphate. This chain is Pyridoxine 5'-phosphate synthase, found in Prochlorococcus marinus (strain MIT 9312).